Consider the following 52-residue polypeptide: Lysis protein for colicin N (52 aa).

Residues 1-17 form the signal peptide; the sequence is MCGKILLILFFIMTLSA. A lipid anchor (N-palmitoyl cysteine) is attached at C18. C18 carries S-diacylglycerol cysteine lipidation.

Its subcellular location is the cell outer membrane. Lysis proteins are required for both colicin release and partial cell lysis. This Escherichia coli protein is Lysis protein for colicin N (cnl).